The primary structure comprises 239 residues: tRNA (guanine-N(7)-)-methyltransferase (239 aa).

4 residues coordinate S-adenosyl-L-methionine: Glu-69, Glu-94, Asp-121, and Asp-144. The active site involves Asp-144. Lys-148 is a substrate binding site. The interval Arg-150–Arg-155 is interaction with RNA. Substrate-binding positions include Asp-180 and Thr-217 to Glu-220.

It belongs to the class I-like SAM-binding methyltransferase superfamily. TrmB family. In terms of assembly, monomer.

It carries out the reaction guanosine(46) in tRNA + S-adenosyl-L-methionine = N(7)-methylguanosine(46) in tRNA + S-adenosyl-L-homocysteine. Its pathway is tRNA modification; N(7)-methylguanine-tRNA biosynthesis. Catalyzes the formation of N(7)-methylguanine at position 46 (m7G46) in tRNA. The protein is tRNA (guanine-N(7)-)-methyltransferase of Yersinia pestis (strain Pestoides F).